The following is a 116-amino-acid chain: Nascent polypeptide-associated complex protein (116 aa).

The NAC-A/B domain occupies 6 to 70 (PKQMKDLERM…AREESKQQQK (65 aa)).

It belongs to the NAC-alpha family. In terms of assembly, homodimer. Interacts with the ribosome. Binds ribosomal RNA.

Its function is as follows. Contacts the emerging nascent chain on the ribosome. This is Nascent polypeptide-associated complex protein from Sulfolobus acidocaldarius (strain ATCC 33909 / DSM 639 / JCM 8929 / NBRC 15157 / NCIMB 11770).